Reading from the N-terminus, the 754-residue chain is 5-methyltetrahydropteroyltriglutamate--homocysteine methyltransferase (754 aa).

5-methyltetrahydropteroyltri-L-glutamate contacts are provided by residues 17-20 (RELK) and Lys-117. Residues 431-433 (IGS) and Glu-484 contribute to the L-homocysteine site. L-methionine is bound by residues 431–433 (IGS) and Glu-484. 5-methyltetrahydropteroyltri-L-glutamate-binding positions include 515 to 516 (RC) and Trp-561. Asp-599 provides a ligand contact to L-homocysteine. An L-methionine-binding site is contributed by Asp-599. A 5-methyltetrahydropteroyltri-L-glutamate-binding site is contributed by Glu-605. Residues His-641, Cys-643, and Glu-665 each coordinate Zn(2+). His-694 serves as the catalytic Proton donor. Cys-726 contacts Zn(2+).

The protein belongs to the vitamin-B12 independent methionine synthase family. Zn(2+) serves as cofactor.

It carries out the reaction 5-methyltetrahydropteroyltri-L-glutamate + L-homocysteine = tetrahydropteroyltri-L-glutamate + L-methionine. Its pathway is amino-acid biosynthesis; L-methionine biosynthesis via de novo pathway; L-methionine from L-homocysteine (MetE route): step 1/1. Functionally, catalyzes the transfer of a methyl group from 5-methyltetrahydrofolate to homocysteine resulting in methionine formation. This Klebsiella pneumoniae subsp. pneumoniae (strain ATCC 700721 / MGH 78578) protein is 5-methyltetrahydropteroyltriglutamate--homocysteine methyltransferase.